Consider the following 259-residue polypeptide: Aspartate/glutamate leucyltransferase (259 aa).

Belongs to the R-transferase family. Bpt subfamily.

The protein resides in the cytoplasm. The catalysed reaction is N-terminal L-glutamyl-[protein] + L-leucyl-tRNA(Leu) = N-terminal L-leucyl-L-glutamyl-[protein] + tRNA(Leu) + H(+). It carries out the reaction N-terminal L-aspartyl-[protein] + L-leucyl-tRNA(Leu) = N-terminal L-leucyl-L-aspartyl-[protein] + tRNA(Leu) + H(+). Functionally, functions in the N-end rule pathway of protein degradation where it conjugates Leu from its aminoacyl-tRNA to the N-termini of proteins containing an N-terminal aspartate or glutamate. This is Aspartate/glutamate leucyltransferase from Sinorhizobium medicae (strain WSM419) (Ensifer medicae).